The following is a 571-amino-acid chain: Hemagglutinin-neuraminidase (571 aa).

Residues Met1–Thr25 lie on the Intravirion side of the membrane. Residues Ile26 to Leu46 traverse the membrane as a helical segment. The Virion surface segment spans residues Asp47 to Pro571. Cystine bridges form between Cys166-Cys190, Cys180-Cys241, and Cys232-Cys245. Residues Asn228–Ser233 are involved in neuraminidase activity. N-linked (GlcNAc...) asparagine; by host glycans are attached at residues Asn272, Asn284, and Asn335. Intrachain disulfides connect Cys338–Cys459, Cys370–Cys380, and Cys453–Cys463. 6 N-linked (GlcNAc...) asparagine; by host glycosylation sites follow: Asn386, Asn454, Asn498, Asn501, Asn517, and Asn522. A disulfide bond links Cys535 and Cys546.

Belongs to the paramyxoviruses hemagglutinin-neuraminidase family. In terms of assembly, homotetramer; composed of disulfide-linked homodimers. Interacts with F protein trimer.

The protein resides in the virion membrane. It is found in the host cell membrane. It carries out the reaction Hydrolysis of alpha-(2-&gt;3)-, alpha-(2-&gt;6)-, alpha-(2-&gt;8)- glycosidic linkages of terminal sialic acid residues in oligosaccharides, glycoproteins, glycolipids, colominic acid and synthetic substrates.. In terms of biological role, attaches the virus to sialic acid-containing cell receptors and thereby initiating infection. Binding of HN protein to the receptor induces a conformational change that allows the F protein to trigger virion/cell membranes fusion. Neuraminidase activity ensures the efficient spread of the virus by dissociating the mature virions from the neuraminic acid containing glycoproteins. This Homo sapiens (Human) protein is Hemagglutinin-neuraminidase (HN).